The following is a 135-amino-acid chain: Large ribosomal subunit protein uL16c (135 aa).

It belongs to the universal ribosomal protein uL16 family. In terms of assembly, part of the 50S ribosomal subunit.

It localises to the plastid. Its subcellular location is the chloroplast. In Acorus calamus var. americanus (American sweet flag), this protein is Large ribosomal subunit protein uL16c.